A 302-amino-acid polypeptide reads, in one-letter code: Surfeit locus protein 4 homolog (302 aa).

6 helical membrane-spanning segments follow: residues 95-115 (APLL…LVVF), 120-140 (AYAI…YGLI), 193-213 (VLLI…ISWT), 215-235 (ILVH…FKAK), 236-256 (FFAA…NSFW), and 271-291 (DFFQ…TGPG). The Di-lysine motif motif lies at 299–302 (KKIY).

Belongs to the SURF4 family.

The protein resides in the endoplasmic reticulum membrane. This is Surfeit locus protein 4 homolog from Schizosaccharomyces pombe (strain 972 / ATCC 24843) (Fission yeast).